The chain runs to 156 residues: MPRKGSVPKRDVLPDPIHNSKLVTKLINKIMLDGKRGTAQRILYSAFDLVKERSGREAVEVFEEAIDNIMPVLEVKARRVGGSNYQVPVEVRPERRTTLGLRWLVNYSRLRGEKTMEERLANEILDAANNTGGAVKKREDTHKMAEANKAFAHYRW.

This sequence belongs to the universal ribosomal protein uS7 family. Part of the 30S ribosomal subunit. Contacts proteins S9 and S11.

Functionally, one of the primary rRNA binding proteins, it binds directly to 16S rRNA where it nucleates assembly of the head domain of the 30S subunit. Is located at the subunit interface close to the decoding center, probably blocks exit of the E-site tRNA. The polypeptide is Small ribosomal subunit protein uS7 (Staphylococcus saprophyticus subsp. saprophyticus (strain ATCC 15305 / DSM 20229 / NCIMB 8711 / NCTC 7292 / S-41)).